The sequence spans 485 residues: Betaine aldehyde dehydrogenase (485 aa).

T23, I24, and D90 together coordinate K(+). 147–149 lines the NAD(+) pocket; sequence GAW. The active-site Charge relay system is K159. Residues 173-176 and 226-229 each bind NAD(+); these read KPSE and EVGT. L241 serves as a coordination point for K(+). E247 (proton acceptor) is an active-site residue. NAD(+)-binding residues include G249, C281, and E382. C281 serves as the catalytic Nucleophile. C281 bears the Cysteine sulfenic acid (-SOH) mark. K452 and G455 together coordinate K(+). E459 (charge relay system) is an active-site residue.

This sequence belongs to the aldehyde dehydrogenase family. As to quaternary structure, dimer of dimers. Requires K(+) as cofactor.

The enzyme catalyses betaine aldehyde + NAD(+) + H2O = glycine betaine + NADH + 2 H(+). The protein operates within amine and polyamine biosynthesis; betaine biosynthesis via choline pathway; betaine from betaine aldehyde: step 1/1. Its function is as follows. Involved in the biosynthesis of the osmoprotectant glycine betaine. Catalyzes the irreversible oxidation of betaine aldehyde to the corresponding acid. The sequence is that of Betaine aldehyde dehydrogenase from Marinomonas sp. (strain MWYL1).